The sequence spans 132 residues: Global transcriptional regulator Spx 2 (132 aa).

The cysteines at positions 10 and 13 are disulfide-linked.

Belongs to the ArsC family. Spx subfamily. In terms of assembly, interacts with the C-terminal domain of the alpha subunit of the RNAP.

It localises to the cytoplasm. Its function is as follows. Global transcriptional regulator that plays a key role in stress response and exerts either positive or negative regulation of genes. Acts by interacting with the C-terminal domain of the alpha subunit of the RNA polymerase (RNAP). This interaction can enhance binding of RNAP to the promoter region of target genes and stimulate their transcription, or block interaction of RNAP with activator. This chain is Global transcriptional regulator Spx 2, found in Lactococcus lactis subsp. lactis (strain IL1403) (Streptococcus lactis).